The primary structure comprises 251 residues: Ubiquinone/menaquinone biosynthesis C-methyltransferase UbiE (251 aa).

S-adenosyl-L-methionine contacts are provided by residues Thr-74, Asp-95, 123–124 (NA), and Ser-140.

The protein belongs to the class I-like SAM-binding methyltransferase superfamily. MenG/UbiE family.

The enzyme catalyses a 2-demethylmenaquinol + S-adenosyl-L-methionine = a menaquinol + S-adenosyl-L-homocysteine + H(+). The catalysed reaction is a 2-methoxy-6-(all-trans-polyprenyl)benzene-1,4-diol + S-adenosyl-L-methionine = a 5-methoxy-2-methyl-3-(all-trans-polyprenyl)benzene-1,4-diol + S-adenosyl-L-homocysteine + H(+). It participates in quinol/quinone metabolism; menaquinone biosynthesis; menaquinol from 1,4-dihydroxy-2-naphthoate: step 2/2. The protein operates within cofactor biosynthesis; ubiquinone biosynthesis. Functionally, methyltransferase required for the conversion of demethylmenaquinol (DMKH2) to menaquinol (MKH2) and the conversion of 2-polyprenyl-6-methoxy-1,4-benzoquinol (DDMQH2) to 2-polyprenyl-3-methyl-6-methoxy-1,4-benzoquinol (DMQH2). The chain is Ubiquinone/menaquinone biosynthesis C-methyltransferase UbiE from Escherichia fergusonii (strain ATCC 35469 / DSM 13698 / CCUG 18766 / IAM 14443 / JCM 21226 / LMG 7866 / NBRC 102419 / NCTC 12128 / CDC 0568-73).